Consider the following 247-residue polypeptide: Triosephosphate isomerase (247 aa).

Residue 9–11 participates in substrate binding; the sequence is NWK. H93 (electrophile) is an active-site residue. E163 acts as the Proton acceptor in catalysis. Substrate-binding positions include G169, S209, and 230-231; that span reads GG.

Belongs to the triosephosphate isomerase family. Homodimer.

Its subcellular location is the cytoplasm. It carries out the reaction D-glyceraldehyde 3-phosphate = dihydroxyacetone phosphate. It functions in the pathway carbohydrate biosynthesis; gluconeogenesis. It participates in carbohydrate degradation; glycolysis; D-glyceraldehyde 3-phosphate from glycerone phosphate: step 1/1. Its function is as follows. Involved in the gluconeogenesis. Catalyzes stereospecifically the conversion of dihydroxyacetone phosphate (DHAP) to D-glyceraldehyde-3-phosphate (G3P). In Dinoroseobacter shibae (strain DSM 16493 / NCIMB 14021 / DFL 12), this protein is Triosephosphate isomerase.